Reading from the N-terminus, the 652-residue chain is DNA mismatch repair protein MutL (652 aa).

It belongs to the DNA mismatch repair MutL/HexB family.

In terms of biological role, this protein is involved in the repair of mismatches in DNA. It is required for dam-dependent methyl-directed DNA mismatch repair. May act as a 'molecular matchmaker', a protein that promotes the formation of a stable complex between two or more DNA-binding proteins in an ATP-dependent manner without itself being part of a final effector complex. This chain is DNA mismatch repair protein MutL, found in Neorickettsia sennetsu (strain ATCC VR-367 / Miyayama) (Ehrlichia sennetsu).